The sequence spans 229 residues: Ribonuclease 3 (229 aa).

An RNase III domain is found at 5–127 (LDRLERKLGY…LIGAIYLDTG (123 aa)). Position 40 (glutamate 40) interacts with Mg(2+). The active site involves aspartate 44. The Mg(2+) site is built by aspartate 113 and glutamate 116. The active site involves glutamate 116. The region spanning 154–224 (DPKTRLQEFL…AAAALVALGV (71 aa)) is the DRBM domain.

This sequence belongs to the ribonuclease III family. Homodimer. Mg(2+) serves as cofactor.

It is found in the cytoplasm. It carries out the reaction Endonucleolytic cleavage to 5'-phosphomonoester.. Functionally, digests double-stranded RNA. Involved in the processing of primary rRNA transcript to yield the immediate precursors to the large and small rRNAs (23S and 16S). Processes some mRNAs, and tRNAs when they are encoded in the rRNA operon. Processes pre-crRNA and tracrRNA of type II CRISPR loci if present in the organism. In Pseudomonas aeruginosa (strain LESB58), this protein is Ribonuclease 3.